The following is a 183-amino-acid chain: Large ribosomal subunit protein uL6 (183 aa).

Belongs to the universal ribosomal protein uL6 family. As to quaternary structure, part of the 50S ribosomal subunit.

Its function is as follows. This protein binds to the 23S rRNA, and is important in its secondary structure. It is located near the subunit interface in the base of the L7/L12 stalk, and near the tRNA binding site of the peptidyltransferase center. In Malacoplasma penetrans (strain HF-2) (Mycoplasma penetrans), this protein is Large ribosomal subunit protein uL6.